A 334-amino-acid chain; its full sequence is AA9 family lytic polysaccharide monooxygenase A (334 aa).

The N-terminal stretch at 1–22 is a signal peptide; the sequence is MSPSFKSTAILGAVALAARVRA. Residues histidine 23 and histidine 108 each coordinate Cu(2+). 2 cysteine pairs are disulfide-bonded: cysteine 78-cysteine 200 and cysteine 119-cysteine 123. An N-linked (GlcNAc...) asparagine glycan is attached at asparagine 160. Residues histidine 186 and glutamine 195 each contribute to the O2 site. Position 197 (tyrosine 197) interacts with Cu(2+). Asparagine 208 carries an N-linked (GlcNAc...) asparagine glycan. The tract at residues 244-304 is disordered; sequence GPALYTGGSS…PSPSLPVEIP (61 aa). A compositionally biased stretch (low complexity) spans 249–265; the sequence is TGGSSPSPNPPTSTQSP.

The protein belongs to the polysaccharide monooxygenase AA9 family. The cofactor is Cu(2+).

The protein resides in the secreted. It carries out the reaction [(1-&gt;4)-beta-D-glucosyl]n+m + reduced acceptor + O2 = 4-dehydro-beta-D-glucosyl-[(1-&gt;4)-beta-D-glucosyl]n-1 + [(1-&gt;4)-beta-D-glucosyl]m + acceptor + H2O.. Its function is as follows. Lytic polysaccharide monooxygenase (LPMO) that depolymerizes crystalline and amorphous polysaccharides via the oxidation of scissile alpha- or beta-(1-4)-glycosidic bonds, yielding C1 or C4 oxidation products. Catalysis by LPMOs requires the reduction of the active-site copper from Cu(II) to Cu(I) by a reducing agent and H(2)O(2) or O(2) as a cosubstrate. Active on hemicelluloses, including xylan, glucomannan, and xyloglucan. Shows clear activity on cellooligosaccharides, generating C4 oxidation products. Also displays activity on konjac glucomannan (KGM), a linear beta-1,4-linked mannan with randomly distributed glucosyl residues; as well as trace activity on lichenan, a linear beta-1,3-beta-1,4-glucan with a 1:2 ratio of beta-1,3 to beta-1,4 linkages. Has no activity on ivory nut mannan (INM), a linear beta-1,4-linked mannan without substitutions. The sequence is that of AA9 family lytic polysaccharide monooxygenase A from Malbranchea cinnamomea (Thermophilic fungus).